The chain runs to 301 residues: Protein phosphatase 1 regulatory subunit 3B (301 aa).

A PP1-binding motif motif is present at residues 79–82; the sequence is RVSF. The CBM21 domain occupies 142–250; it reads RNRLQAESVC…SNKGLNYRIV (109 aa).

As to quaternary structure, interacts with glycogen, PPP1CC catalytic subunit of PP1 and PYGL. Associates with glycogen particles. Forms complexes with debranching enzyme, glycogen phosphorylase, glycogen synthase and phosphorylase kinase which is necessary for its regulation of PP1 activity.

In terms of biological role, acts as a glycogen-targeting subunit for phosphatase PP1. Facilitates interaction of the PP1 with enzymes of the glycogen metabolism and regulates its activity. Suppresses the rate at which PP1 dephosphorylates (inactivates) glycogen phosphorylase and enhances the rate at which it activates glycogen synthase and therefore limits glycogen breakdown. The chain is Protein phosphatase 1 regulatory subunit 3B (ppp1r3b) from Xenopus tropicalis (Western clawed frog).